The following is a 1121-amino-acid chain: Phytochrome 2 (1121 aa).

Positions 214–393 (DIGLLCDTVV…VFGMQLNMEV (180 aa)) constitute a GAF domain. Position 319 (Cys319) interacts with phytochromobilin. PAS domains follow at residues 608–679 (VANE…SQGE) and 742–813 (DYKT…TKFM). The 221-residue stretch at 893-1113 (YIRQEIKNPL…VVYVELPMAQ (221 aa)) folds into the Histidine kinase domain.

The protein belongs to the phytochrome family. As to quaternary structure, homodimer. Post-translationally, contains one covalently linked phytochromobilin chromophore.

In terms of biological role, regulatory photoreceptor which exists in two forms that are reversibly interconvertible by light: the Pr form that absorbs maximally in the red region of the spectrum and the Pfr form that absorbs maximally in the far-red region. Photoconversion of Pr to Pfr induces an array of morphogenic responses, whereas reconversion of Pfr to Pr cancels the induction of those responses. Pfr controls the expression of a number of nuclear genes including those encoding the small subunit of ribulose-bisphosphate carboxylase, chlorophyll A/B binding protein, protochlorophyllide reductase, rRNA, etc. It also controls the expression of its own gene(s) in a negative feedback fashion. The sequence is that of Phytochrome 2 (PHY2) from Ceratodon purpureus (Fire moss).